The chain runs to 339 residues: Glycerol-3-phosphate dehydrogenase [NAD(P)+] (339 aa).

Ser-13, Trp-14, and Lys-108 together coordinate NADPH. Lys-108, Gly-139, and Ser-141 together coordinate sn-glycerol 3-phosphate. Position 143 (Ala-143) interacts with NADPH. Sn-glycerol 3-phosphate is bound by residues Lys-194, Asp-247, Ser-257, Arg-258, and Asn-259. Lys-194 functions as the Proton acceptor in the catalytic mechanism. Arg-258 is a binding site for NADPH. Residues Val-282 and Glu-284 each contribute to the NADPH site.

The protein belongs to the NAD-dependent glycerol-3-phosphate dehydrogenase family.

The protein localises to the cytoplasm. The catalysed reaction is sn-glycerol 3-phosphate + NAD(+) = dihydroxyacetone phosphate + NADH + H(+). It catalyses the reaction sn-glycerol 3-phosphate + NADP(+) = dihydroxyacetone phosphate + NADPH + H(+). It functions in the pathway membrane lipid metabolism; glycerophospholipid metabolism. In terms of biological role, catalyzes the reduction of the glycolytic intermediate dihydroxyacetone phosphate (DHAP) to sn-glycerol 3-phosphate (G3P), the key precursor for phospholipid synthesis. This is Glycerol-3-phosphate dehydrogenase [NAD(P)+] from Streptococcus mutans serotype c (strain ATCC 700610 / UA159).